A 334-amino-acid polypeptide reads, in one-letter code: HTH-type transcriptional repressor PurR (334 aa).

Residues 2–56 (ATIKDVARLAGVSTTTVSHVINKTRFVAEATQEKVNKAVDELNYAPSAVARSLKC) form the HTH lacI-type domain. The segment at residues 4-23 (IKDVARLAGVSTTTVSHVIN) is a DNA-binding region (H-T-H motif). A DNA-binding region spans residues 48 to 56 (SAVARSLKC). Residues Phe73, Lys189, Phe220, and Asp274 each contribute to the hypoxanthine site.

In terms of assembly, homodimer.

It functions in the pathway purine metabolism; purine nucleotide biosynthesis [regulation]. In terms of biological role, is the main repressor of the genes involved in the de novo synthesis of purine nucleotides, regulating purB, purC, purEK, purF, purHD, purL, purMN and guaBA expression. PurR is allosterically activated to bind its cognate DNA by binding the purine corepressors, hypoxanthine or guanine, thereby effecting transcription repression. This chain is HTH-type transcriptional repressor PurR, found in Vibrio atlanticus (strain LGP32) (Vibrio splendidus (strain Mel32)).